We begin with the raw amino-acid sequence, 244 residues long: Ras-related protein Rab-12 (244 aa).

M1 carries the post-translational modification N-acetylmethionine. Over residues 1–10 (MDPGAALQRR) the composition is skewed to low complexity. Residues 1 to 37 (MDPGAALQRRAGGGGGLGAGSPALSGGQGRRRKQPPR) are disordered. S21 and S25 each carry phosphoserine. G52 is a binding site for GDP. Residues G52, V53, G54, K55, and T56 each coordinate GTP. G54, K55, T56, and S57 together coordinate GDP. Position 56 (T56) interacts with Mg(2+). 2 consecutive short sequence motifs (switch) follow at residues 65-79 (DTFCEACKSTVGVDF) and 97-114 (DTAGQERFNSITSAYYRS). S73 and T74 together coordinate GTP. Mg(2+) is bound by residues T74 and D97. G100 is a binding site for GTP. S106 bears the Phosphoserine; by LRRK2 mark. N155, K156, D158, and C159 together coordinate GDP. N155, K156, and D158 together coordinate GTP. Positions 186, 187, and 188 each coordinate GTP. GDP is bound by residues A187 and K188. Positions 225-244 (QPEPEIPPELPPPRPHVRCC) are disordered. Over residues 228-238 (PEIPPELPPPR) the composition is skewed to pro residues. 2 S-geranylgeranyl cysteine lipidation sites follow: C243 and C244.

Belongs to the small GTPase superfamily. Rab family. As to quaternary structure, interacts with RABIF. Interacts with OPTN. Interacts with LRRK2; interaction facilitates phosphorylation of Ser-106. Interacts with GDI1, GDI2, CHM and CHML; these interactions are disrupted by phosphorylation on Ser-106. Interacts with RILPL1 and RILPL2; these interactions are dependent on phosphorylation of Ser-106. It depends on Mg(2+) as a cofactor. In terms of processing, phosphorylation of Ser-106 in the switch II region by LRRK2 prevents the association of RAB regulatory proteins, including CHM, CHML and RAB GDP dissociation inhibitors GDI1 and GDI2.

Its subcellular location is the recycling endosome membrane. It is found in the lysosome membrane. It localises to the golgi apparatus membrane. The protein resides in the cytoplasmic vesicle. The protein localises to the autophagosome. It catalyses the reaction GTP + H2O = GDP + phosphate + H(+). Its activity is regulated as follows. Regulated by guanine nucleotide exchange factors (GEFs) including DENND3 which promote the exchange of bound GDP for free GTP. Regulated by GTPase activating proteins (GAPs) which increase the GTP hydrolysis activity. Inhibited by GDP dissociation inhibitors (GDIs). The small GTPases Rab are key regulators of intracellular membrane trafficking, from the formation of transport vesicles to their fusion with membranes. Rabs cycle between an inactive GDP-bound form and an active GTP-bound form that is able to recruit to membranes different sets of downstream effectors directly responsible for vesicle formation, movement, tethering and fusion. RAB12 may play a role in protein transport from recycling endosomes to lysosomes regulating, for instance, the degradation of the transferrin receptor. Involved in autophagy. This Homo sapiens (Human) protein is Ras-related protein Rab-12.